Reading from the N-terminus, the 116-residue chain is Dynein light chain Tctex-type 3 (116 aa).

Tyrosine 4 is modified (3'-nitrotyrosine).

It belongs to the dynein light chain Tctex-type family. In terms of assembly, homodimer. The cytoplasmic dynein 1 complex consists of two catalytic heavy chains (HCs) and a number of non-catalytic subunits presented by intermediate chains (ICs), light intermediate chains (LICs) and light chains (LCs); the composition seems to vary in respect to the IC, LIC and LC composition. The heavy chain homodimer serves as a scaffold for the probable homodimeric assembly of the respective non-catalytic subunits. The ICs and LICs bind directly to the HC dimer and the LCs assemble on the IC dimer. DYNLT1 and DYNLT3 compete for association with dynein IC (DYNC1I1 or DYNC1I2). Self-associates. Interacts with DYNC1I1 and DYNC1I2. Interacts with BUB3. Interacts with SATB1 in nucleus to form complex with matrix attachment regions (MARs) of DNA.

It is found in the nucleus. The protein resides in the cytoplasm. Its subcellular location is the cytoskeleton. The protein localises to the chromosome. It localises to the centromere. It is found in the kinetochore. Functionally, acts as one of several non-catalytic accessory components of the cytoplasmic dynein 1 complex that are thought to be involved in linking dynein to cargos and to adapter proteins that regulate dynein function. Cytoplasmic dynein 1 acts as a motor for the intracellular retrograde motility of vesicles and organelles along microtubules. Probably binds BUB3 as part of transport cargo. Required for the efficient progression through mitosis. This is Dynein light chain Tctex-type 3 (DYNLT3) from Homo sapiens (Human).